The primary structure comprises 388 residues: Chalcone synthase D (388 aa).

The active site involves Cys164.

The protein belongs to the thiolase-like superfamily. Chalcone/stilbene synthases family.

It carries out the reaction (E)-4-coumaroyl-CoA + 3 malonyl-CoA + 3 H(+) = 2',4,4',6'-tetrahydroxychalcone + 3 CO2 + 4 CoA. Its pathway is secondary metabolite biosynthesis; flavonoid biosynthesis. Its function is as follows. The primary product of this enzyme is 4,2',4',6'-tetrahydroxychalcone (also termed naringenin-chalcone or chalcone) which can under specific conditions spontaneously isomerize into naringenin. The polypeptide is Chalcone synthase D (CHSD) (Ipomoea nil (Japanese morning glory)).